Reading from the N-terminus, the 125-residue chain is Large ribosomal subunit protein bL17 (125 aa).

The protein belongs to the bacterial ribosomal protein bL17 family. Part of the 50S ribosomal subunit. Contacts protein L32.

The sequence is that of Large ribosomal subunit protein bL17 from Blochmanniella floridana.